Here is a 468-residue protein sequence, read N- to C-terminus: Squamosa promoter-binding-like protein 5 (468 aa).

The SBP-type zinc-finger motif lies at 204–281; it reads PPRCQAEGCK…TEHNRRRRKP (78 aa). Residues Cys207, Cys212, Cys229, His232, Cys248, Cys251, His255, and Cys267 each coordinate Zn(2+). Positions 264–280 match the Bipartite nuclear localization signal motif; sequence KRSCRKRLTEHNRRRRK. Disordered stretches follow at residues 270 to 305, 354 to 374, and 405 to 458; these read RLTEHNRRRRKPTAGGQSSKDSPPPPPSKKGTDASI, TLSLAALPPQEEDDEDEDGGL, and HHHL…SNNN. Over residues 363-372 the composition is skewed to acidic residues; it reads QEEDDEDEDG. Positions 438-458 are enriched in low complexity; the sequence is NNNNILSCSSASDQQNSSNNN.

Ubiquitous.

Its subcellular location is the nucleus. Functionally, trans-acting factor that binds specifically to the consensus nucleotide sequence 5'-TNCGTACAA-3'. This Oryza sativa subsp. japonica (Rice) protein is Squamosa promoter-binding-like protein 5 (SPL5).